A 201-amino-acid chain; its full sequence is Holliday junction branch migration complex subunit RuvA (201 aa).

The domain I stretch occupies residues 1-64; the sequence is MIGRLRGTLA…EDAQLLYGFA (64 aa). The tract at residues 65-143 is domain II; sequence EKRERELFRE…AWESMPAIAT (79 aa). The interval 144-152 is flexible linker; it reads LVVEPGSKT. Residues 153-201 form a domain III region; it reads AVTSAENDAVSALISLGFKPQEASRAVSAIQEENLSSEEMIRRALKGMV.

The protein belongs to the RuvA family. In terms of assembly, homotetramer. Forms an RuvA(8)-RuvB(12)-Holliday junction (HJ) complex. HJ DNA is sandwiched between 2 RuvA tetramers; dsDNA enters through RuvA and exits via RuvB. An RuvB hexamer assembles on each DNA strand where it exits the tetramer. Each RuvB hexamer is contacted by two RuvA subunits (via domain III) on 2 adjacent RuvB subunits; this complex drives branch migration. In the full resolvosome a probable DNA-RuvA(4)-RuvB(12)-RuvC(2) complex forms which resolves the HJ.

The protein localises to the cytoplasm. The RuvA-RuvB-RuvC complex processes Holliday junction (HJ) DNA during genetic recombination and DNA repair, while the RuvA-RuvB complex plays an important role in the rescue of blocked DNA replication forks via replication fork reversal (RFR). RuvA specifically binds to HJ cruciform DNA, conferring on it an open structure. The RuvB hexamer acts as an ATP-dependent pump, pulling dsDNA into and through the RuvAB complex. HJ branch migration allows RuvC to scan DNA until it finds its consensus sequence, where it cleaves and resolves the cruciform DNA. This Stutzerimonas stutzeri (strain A1501) (Pseudomonas stutzeri) protein is Holliday junction branch migration complex subunit RuvA.